Consider the following 142-residue polypeptide: Large ribosomal subunit protein uL13 (142 aa).

Belongs to the universal ribosomal protein uL13 family. In terms of assembly, part of the 50S ribosomal subunit.

This protein is one of the early assembly proteins of the 50S ribosomal subunit, although it is not seen to bind rRNA by itself. It is important during the early stages of 50S assembly. This is Large ribosomal subunit protein uL13 from Alteromonas mediterranea (strain DSM 17117 / CIP 110805 / LMG 28347 / Deep ecotype).